The primary structure comprises 122 residues: Small ribosomal subunit protein uS13 (122 aa).

Residues 97 to 122 (PVRGQRTHTNAKTRKGRSKLPIAGKK) form a disordered region.

The protein belongs to the universal ribosomal protein uS13 family. In terms of assembly, part of the 30S ribosomal subunit. Forms a loose heterodimer with protein S19. Forms two bridges to the 50S subunit in the 70S ribosome.

Its function is as follows. Located at the top of the head of the 30S subunit, it contacts several helices of the 16S rRNA. In the 70S ribosome it contacts the 23S rRNA (bridge B1a) and protein L5 of the 50S subunit (bridge B1b), connecting the 2 subunits; these bridges are implicated in subunit movement. Contacts the tRNAs in the A and P-sites. The sequence is that of Small ribosomal subunit protein uS13 from Wolbachia pipientis subsp. Culex pipiens (strain wPip).